A 325-amino-acid chain; its full sequence is Homocysteine S-methyltransferase 2 (325 aa).

Residues 6-321 enclose the Hcy-binding domain; the sequence is LKQFLADNPK…KDIQEISAAV (316 aa). The residue at position 138 (Thr138) is a Phosphothreonine. Zn(2+) is bound by residues Cys239, Cys306, and Cys307.

The cofactor is Zn(2+).

The protein resides in the cytoplasm. The protein localises to the nucleus. It catalyses the reaction S-methyl-L-methionine + L-homocysteine = 2 L-methionine + H(+). In terms of biological role, homocysteine S-methyltransferase involved in the conversion of S-adenosylmethionine (AdoMet) to methionine to control the methionine/AdoMet ratio. Also converts S-methylmethionine (SMM) to methionine. In Saccharomyces cerevisiae (strain ATCC 204508 / S288c) (Baker's yeast), this protein is Homocysteine S-methyltransferase 2 (SAM4).